A 437-amino-acid polypeptide reads, in one-letter code: Phosphomethylpyrimidine synthase (437 aa).

Substrate is bound by residues asparagine 69, methionine 98, tyrosine 127, histidine 163, 185-187 (SRG), 226-229 (DACR), and glutamate 265. Histidine 269 is a binding site for Zn(2+). Substrate is bound at residue tyrosine 292. Residue histidine 333 coordinates Zn(2+). [4Fe-4S] cluster contacts are provided by cysteine 409, cysteine 412, and cysteine 416.

Belongs to the ThiC family. It depends on [4Fe-4S] cluster as a cofactor.

The enzyme catalyses 5-amino-1-(5-phospho-beta-D-ribosyl)imidazole + S-adenosyl-L-methionine = 4-amino-2-methyl-5-(phosphooxymethyl)pyrimidine + CO + 5'-deoxyadenosine + formate + L-methionine + 3 H(+). It participates in cofactor biosynthesis; thiamine diphosphate biosynthesis. Functionally, catalyzes the synthesis of the hydroxymethylpyrimidine phosphate (HMP-P) moiety of thiamine from aminoimidazole ribotide (AIR) in a radical S-adenosyl-L-methionine (SAM)-dependent reaction. The chain is Phosphomethylpyrimidine synthase from Clostridium novyi (strain NT).